A 382-amino-acid chain; its full sequence is Mannan endo-1,4-beta-mannosidase (382 aa).

The N-terminal stretch at methionine 1–serine 19 is a signal peptide. Substrate contacts are provided by residues tryptophan 83, asparagine 144, tryptophan 147–lysine 151, and asparagine 180. Residue glutamate 181 is the Proton donor/acceptor of the active site. The substrate site is built by glutamine 187, glutamine 204, tryptophan 208, tryptophan 243, tyrosine 282, and histidine 284. A disulfide bridge connects residues cysteine 195 and cysteine 262. The active-site Nucleophile is glutamate 312. An intrachain disulfide couples cysteine 317 to cysteine 349. Tryptophan 341 and aspartate 348 together coordinate substrate. The segment at glycine 346 to serine 350 is involved in stabilization of the transition state.

This sequence belongs to the glycosyl hydrolase 5 (cellulase A) family. Monomer.

The protein localises to the secreted. The enzyme catalyses Random hydrolysis of (1-&gt;4)-beta-D-mannosidic linkages in mannans, galactomannans and glucomannans.. Its activity is regulated as follows. Activated particularly by Ca(2+) and Zn(2+), and to a lesser extent by Na(+), K(+), Mg(2+) and Cu(2+). Activation effect of the divalent metal ions Ca(2+), Zn(2+), Mg(2+) and Cu(2+) is reduced significantly by the addition of EDTA. Strongly inhibited by Mn(2+), Hg(2+) and Ag(+). Functionally, hydrolyzes 1,4-beta linked polysaccharide backbones of mannans. Has high activity toward locust bean gum. Also active toward konjac and beta-1,4-mannan. Hydrolyzes mannotetraose (M4) and mannopentaose (M5) to mannobiose (M2) and mannotriose (M3) with a little production of mannose (M1). Hydrolyzes beta-1,4-mannan to M2, M3 and M4. Hardly hydrolyzes M2 and M3. Does not hydrolyze p-nitrophenyl-beta-D-mannopyranoside, gua-gum, carboxymethyl cellulose, soluble starch or laminarin. This chain is Mannan endo-1,4-beta-mannosidase, found in Cryptopygus antarcticus (Antarctic springtail).